Consider the following 172-residue polypeptide: 3-hydroxydecanoyl-[acyl-carrier-protein] dehydratase (172 aa).

Residue His71 is part of the active site.

The protein belongs to the thioester dehydratase family. FabA subfamily. In terms of assembly, homodimer.

The protein resides in the cytoplasm. The enzyme catalyses a (3R)-hydroxyacyl-[ACP] = a (2E)-enoyl-[ACP] + H2O. The catalysed reaction is (3R)-hydroxydecanoyl-[ACP] = (2E)-decenoyl-[ACP] + H2O. It catalyses the reaction (2E)-decenoyl-[ACP] = (3Z)-decenoyl-[ACP]. Its pathway is lipid metabolism; fatty acid biosynthesis. Necessary for the introduction of cis unsaturation into fatty acids. Catalyzes the dehydration of (3R)-3-hydroxydecanoyl-ACP to E-(2)-decenoyl-ACP and then its isomerization to Z-(3)-decenoyl-ACP. Can catalyze the dehydratase reaction for beta-hydroxyacyl-ACPs with saturated chain lengths up to 16:0, being most active on intermediate chain length. The chain is 3-hydroxydecanoyl-[acyl-carrier-protein] dehydratase from Yersinia pseudotuberculosis serotype O:1b (strain IP 31758).